The primary structure comprises 491 residues: Serine hydroxymethyltransferase (491 aa).

(6S)-5,6,7,8-tetrahydrofolate contacts are provided by residues leucine 173 and 177–179 (GHL). Lysine 285 is modified (N6-(pyridoxal phosphate)lysine).

It belongs to the SHMT family. As to quaternary structure, homodimer. Pyridoxal 5'-phosphate serves as cofactor.

The protein resides in the cytoplasm. It catalyses the reaction (6R)-5,10-methylene-5,6,7,8-tetrahydrofolate + glycine + H2O = (6S)-5,6,7,8-tetrahydrofolate + L-serine. The protein operates within one-carbon metabolism; tetrahydrofolate interconversion. It functions in the pathway amino-acid biosynthesis; glycine biosynthesis; glycine from L-serine: step 1/1. Functionally, catalyzes the reversible interconversion of serine and glycine with tetrahydrofolate (THF) serving as the one-carbon carrier. This reaction serves as the major source of one-carbon groups required for the biosynthesis of purines, thymidylate, methionine, and other important biomolecules. Also exhibits THF-independent aldolase activity toward beta-hydroxyamino acids, producing glycine and aldehydes, via a retro-aldol mechanism. The chain is Serine hydroxymethyltransferase from Cutibacterium acnes (strain DSM 16379 / KPA171202) (Propionibacterium acnes).